We begin with the raw amino-acid sequence, 138 residues long: Superoxide dismutase [Mn] (138 aa).

Residues His-1, His-49, Asp-133, and His-137 each coordinate Mn(2+).

This sequence belongs to the iron/manganese superoxide dismutase family. Mn(2+) serves as cofactor.

The catalysed reaction is 2 superoxide + 2 H(+) = H2O2 + O2. In terms of biological role, destroys superoxide anion radicals which are normally produced within the cells and which are toxic to biological systems. This is Superoxide dismutase [Mn] (sodA) from Mycobacterium celatum.